We begin with the raw amino-acid sequence, 432 residues long: Adenylosuccinate synthetase (432 aa).

GTP-binding positions include 13–19 and 41–43; these read GDEGKGK and GHT. The active-site Proton acceptor is Asp-14. Residues Asp-14 and Gly-41 each coordinate Mg(2+). IMP is bound by residues 14 to 17, 39 to 42, Thr-130, Arg-144, Gln-225, Thr-240, and Arg-304; these read DEGK and NAGH. The active-site Proton donor is the His-42. Residue 300–306 participates in substrate binding; sequence ATTGRRR. GTP contacts are provided by residues Arg-306, 332-334, and 414-416; these read KLD and STG.

This sequence belongs to the adenylosuccinate synthetase family. Homodimer. It depends on Mg(2+) as a cofactor.

It is found in the cytoplasm. The catalysed reaction is IMP + L-aspartate + GTP = N(6)-(1,2-dicarboxyethyl)-AMP + GDP + phosphate + 2 H(+). Its pathway is purine metabolism; AMP biosynthesis via de novo pathway; AMP from IMP: step 1/2. Functionally, plays an important role in the de novo pathway of purine nucleotide biosynthesis. Catalyzes the first committed step in the biosynthesis of AMP from IMP. This chain is Adenylosuccinate synthetase, found in Methylococcus capsulatus (strain ATCC 33009 / NCIMB 11132 / Bath).